We begin with the raw amino-acid sequence, 363 residues long: Type 3 secretion system translocon protein SctB (363 aa).

A compositionally biased stretch (polar residues) spans 1 to 16; sequence MEIQNTKPTQTLYTDI. The disordered stretch occupies residues 1–30; that stretch reads MEIQNTKPTQTLYTDISTKQTQSSSETQKS. Residues 17–30 are compositionally biased toward low complexity; that stretch reads STKQTQSSSETQKS. The tract at residues 33–73 is ipgC chaperone binding domain; that stretch reads YQQIAAHIPLNVGKNPVLTTTLNDDQLLKLSEQVQHDSEII. The helical transmembrane segment at 99–120 threads the bilayer; it reads ISSLSSNAVSLIISVAVLLSAL.

This sequence belongs to the SctB/SipC family. As to quaternary structure, the core secretion machinery of the T3SS is composed of approximately 20 different proteins, including cytoplasmic components, a base, an export apparatus and a needle. This subunit is involved in the formation of a pore, called the translocon, in host membrane. Interacts with IpaB/SctE. Interacts with the molecular chaperone IpgC, which prevents premature association with IpaB/SctE within the cytoplasm of Shigella cells. Does not interact with CDC42 or RAC1 GTPases in vitro.

It localises to the secreted. The protein resides in the host membrane. With respect to regulation, interaction with the membrane is affected by the pH. Component of the type III secretion system (T3SS), also called injectisome, which is used to inject bacterial effector proteins into eukaryotic host cells. IpaB/SctE and IpaC/SctB are inserted into the host membrane where they form a pore and allow the translocation of effector proteins into the cytosol of target cells. Induction and secretion of IpaC/SctB comprise the final step in triggering the induction of full type III secretion. Its function is as follows. Required for efficient dissemination. Necessary for lysis of the two cellular membranes that surround bacteria in protrusions during cell-to-cell spread. Contribute to actin nucleation in vitro, which may be a necessary step in Shigella invasion. The sequence is that of Type 3 secretion system translocon protein SctB from Shigella flexneri.